Here is a 546-residue protein sequence, read N- to C-terminus: Major facilitator superfamily transporter MPN_077 (546 aa).

Helical transmembrane passes span 2–22 (WGLV…IDFI), 62–82 (WTIT…VVKF), 88–108 (VMIM…GSPL), 179–199 (AFFI…IAYA), 220–240 (FWGF…PGVG), 248–268 (VWVV…FAWF), 305–325 (LLAI…QTWF), 344–364 (PILL…LSPF), 377–397 (FIFT…ATLG), 401–421 (VVGF…GWSL), 442–462 (IIFG…DIIT), and 485–505 (IAAI…IIYL).

The protein belongs to the major facilitator superfamily.

It is found in the cell membrane. In Mycoplasma pneumoniae (strain ATCC 29342 / M129 / Subtype 1) (Mycoplasmoides pneumoniae), this protein is Major facilitator superfamily transporter MPN_077.